Consider the following 207-residue polypeptide: Peptidyl-tRNA hydrolase (207 aa).

Y17 is a binding site for tRNA. H22 functions as the Proton acceptor in the catalytic mechanism. TRNA is bound by residues F68, N70, and N116.

The protein belongs to the PTH family. Monomer.

Its subcellular location is the cytoplasm. It carries out the reaction an N-acyl-L-alpha-aminoacyl-tRNA + H2O = an N-acyl-L-amino acid + a tRNA + H(+). In terms of biological role, hydrolyzes ribosome-free peptidyl-tRNAs (with 1 or more amino acids incorporated), which drop off the ribosome during protein synthesis, or as a result of ribosome stalling. Functionally, catalyzes the release of premature peptidyl moieties from peptidyl-tRNA molecules trapped in stalled 50S ribosomal subunits, and thus maintains levels of free tRNAs and 50S ribosomes. The polypeptide is Peptidyl-tRNA hydrolase (Buchnera aphidicola subsp. Baizongia pistaciae (strain Bp)).